A 367-amino-acid chain; its full sequence is MLAKPTIKRRESTKIYVGNVPIGGDAPIAVQSMTNTRTTDVEATVAQIKALERVGADIVRVSVPTMDAAEAFKLIKQQVNVPLVADIHFDYRIALKVAEYGVDCLRINPGNIGREDRIRAVVDCARDNNIPIRIGVNAGSLEKDLQEKYGEPTPEALLESALRHVEILDRLNFDQFKVSVKASDVFLAVESYRLLAKAIKQPLHLGITEAGGFRAGAVKSAVGLGMLLAEGIGDTLRISLAADPVEEIKVGFDILKSLRIRSRGINFIACPTCSRQEFDVIGTVNALEQRLEDIITPMDVSIIGCVVNGPGEALVSDLGVTGGNKKSGYYLDGERQKERFDNDDLINQLEAKIRAKVAAQDPKNRII.

4 residues coordinate [4Fe-4S] cluster: cysteine 270, cysteine 273, cysteine 305, and glutamate 312.

The protein belongs to the IspG family. [4Fe-4S] cluster serves as cofactor.

It carries out the reaction (2E)-4-hydroxy-3-methylbut-2-enyl diphosphate + oxidized [flavodoxin] + H2O + 2 H(+) = 2-C-methyl-D-erythritol 2,4-cyclic diphosphate + reduced [flavodoxin]. The protein operates within isoprenoid biosynthesis; isopentenyl diphosphate biosynthesis via DXP pathway; isopentenyl diphosphate from 1-deoxy-D-xylulose 5-phosphate: step 5/6. Its function is as follows. Converts 2C-methyl-D-erythritol 2,4-cyclodiphosphate (ME-2,4cPP) into 1-hydroxy-2-methyl-2-(E)-butenyl 4-diphosphate. The chain is 4-hydroxy-3-methylbut-2-en-1-yl diphosphate synthase (flavodoxin) from Pasteurella multocida (strain Pm70).